Consider the following 667-residue polypeptide: Cysteine-rich receptor-like protein kinase 11 (667 aa).

The first 24 residues, 1 to 24 (MKQRSLFSVLCFFFISFGVASVSA), serve as a signal peptide directing secretion. Gnk2-homologous domains are found at residues 25-129 (QTCT…NTSF) and 135-248 (LNPR…LYTY). The Extracellular segment spans residues 25 to 292 (QTCTTDKGTF…SKGISAGVVV (268 aa)). 7 N-linked (GlcNAc...) asparagine glycosylation sites follow: Asn-37, Asn-54, Asn-64, Asn-106, Asn-126, Asn-150, and Asn-254. Pro residues predominate over residues 259-268 (SPPPEPPVTV). The tract at residues 259–282 (SPPPEPPVTVPQPAGDQDNPTNND) is disordered. The N-linked (GlcNAc...) asparagine glycan is linked to Asn-281. A helical membrane pass occupies residues 293-313 (AITVPTVIAILILLVLGFVLF). Topologically, residues 314–667 (RRRKSYQRTK…YTSKSSSFSS (354 aa)) are cytoplasmic. Residues 350–629 (FSTSNKLGEG…IILMLTSNTI (280 aa)) enclose the Protein kinase domain. Residues 356 to 364 (LGEGGFGAV) and Lys-378 each bind ATP. Position 423 is a phosphotyrosine (Tyr-423). The Proton acceptor role is filled by Asp-475. Ser-479 is modified (phosphoserine). A Phosphothreonine modification is found at Thr-515. Tyr-523 carries the phosphotyrosine modification.

Belongs to the protein kinase superfamily. Ser/Thr protein kinase family. CRK subfamily. Detected in root, stem, leaf and flower.

The protein localises to the membrane. It catalyses the reaction L-seryl-[protein] + ATP = O-phospho-L-seryl-[protein] + ADP + H(+). The catalysed reaction is L-threonyl-[protein] + ATP = O-phospho-L-threonyl-[protein] + ADP + H(+). In Arabidopsis thaliana (Mouse-ear cress), this protein is Cysteine-rich receptor-like protein kinase 11 (CRK11).